Here is an 846-residue protein sequence, read N- to C-terminus: Aminopeptidase N (846 aa).

Substrate-binding positions include glutamate 120 and 252–256 (GAMEN). Histidine 288 lines the Zn(2+) pocket. Glutamate 289 serves as the catalytic Proton acceptor. Residues histidine 292 and glutamate 311 each contribute to the Zn(2+) site.

Belongs to the peptidase M1 family. Monomer. Zn(2+) serves as cofactor.

The protein resides in the cytoplasm. The catalysed reaction is Release of an N-terminal amino acid, Xaa-|-Yaa- from a peptide, amide or arylamide. Xaa is preferably Ala, but may be most amino acids including Pro (slow action). When a terminal hydrophobic residue is followed by a prolyl residue, the two may be released as an intact Xaa-Pro dipeptide.. Aminopeptidase with broad substrate specificity to several peptides. It has more affinity for oligopeptides than for dipeptides. It plays an essential role in the metabolism, it may be involved in nitrogen supply or protein turnover. The polypeptide is Aminopeptidase N (pepN) (Lactococcus lactis subsp. cremoris (Streptococcus cremoris)).